We begin with the raw amino-acid sequence, 58 residues long: Large ribosomal subunit protein bL32 (58 aa).

The span at 1 to 15 (MAVPKKKTSKAKRNQ) shows a compositional bias: basic residues. The tract at residues 1–23 (MAVPKKKTSKAKRNQRSATWKGK) is disordered.

It belongs to the bacterial ribosomal protein bL32 family.

The protein is Large ribosomal subunit protein bL32 of Synechococcus sp. (strain CC9902).